A 403-amino-acid polypeptide reads, in one-letter code: RNA-binding motif, single-stranded-interacting protein 1 (403 aa).

The tract at residues 30-56 (PAHPMAPPSPSTTSSNNNSSSSSNSGW) is disordered. Residues 40-54 (STTSSNNNSSSSSNS) show a composition bias toward low complexity. 2 RRM domains span residues 62–135 (TNLY…MAKQ) and 141–226 (TNLY…FADG). Phosphothreonine is present on T208.

The protein resides in the nucleus. In terms of biological role, single-stranded DNA binding protein that interacts with the region upstream of the MYC gene. Binds specifically to the DNA sequence motif 5'-[AT]CT[AT][AT]T-3'. Probably has a role in DNA replication. This Rattus norvegicus (Rat) protein is RNA-binding motif, single-stranded-interacting protein 1.